A 397-amino-acid polypeptide reads, in one-letter code: Argininosuccinate synthase (397 aa).

9–17 (AYSGGLDTS) contributes to the ATP binding site. An L-citrulline-binding site is contributed by Tyr-86. Position 116 (Gly-116) interacts with ATP. The L-aspartate site is built by Thr-118, Asn-122, and Asp-123. Residue Asn-122 participates in L-citrulline binding. L-citrulline contacts are provided by Arg-126, Ser-174, Glu-259, and Tyr-271.

Belongs to the argininosuccinate synthase family. Type 1 subfamily. In terms of assembly, homotetramer.

It localises to the cytoplasm. The catalysed reaction is L-citrulline + L-aspartate + ATP = 2-(N(omega)-L-arginino)succinate + AMP + diphosphate + H(+). It participates in amino-acid biosynthesis; L-arginine biosynthesis; L-arginine from L-ornithine and carbamoyl phosphate: step 2/3. This chain is Argininosuccinate synthase, found in Lactococcus lactis subsp. cremoris (strain SK11).